Here is a 250-residue protein sequence, read N- to C-terminus: ATP synthase subunit a (250 aa).

Transmembrane regions (helical) follow at residues 29 to 49, 84 to 104, 114 to 134, 143 to 163, 185 to 205, and 208 to 228; these read ASLF…FATS, FFPL…LGMV, IIVT…YGFI, LFVP…IEII, ITLK…ALGI, and AILP…VAFL.

It belongs to the ATPase A chain family. As to quaternary structure, F-type ATPases have 2 components, CF(1) - the catalytic core - and CF(0) - the membrane proton channel. CF(1) has five subunits: alpha(3), beta(3), gamma(1), delta(1), epsilon(1). CF(0) has three main subunits: a(1), b(2) and c(9-12). The alpha and beta chains form an alternating ring which encloses part of the gamma chain. CF(1) is attached to CF(0) by a central stalk formed by the gamma and epsilon chains, while a peripheral stalk is formed by the delta and b chains.

It localises to the cell inner membrane. Key component of the proton channel; it plays a direct role in the translocation of protons across the membrane. The polypeptide is ATP synthase subunit a (Rhizobium rhizogenes (strain K84 / ATCC BAA-868) (Agrobacterium radiobacter)).